A 437-amino-acid polypeptide reads, in one-letter code: GTPase Der (437 aa).

EngA-type G domains follow at residues 4–168 and 178–353; these read NIVA…PEKP and PRFA…ENRK. GTP-binding positions include 10-17, 57-61, 120-123, 184-191, 231-235, and 296-299; these read GRPNVGKS, DTGGY, NKVD, GRPNAGKS, DTAGI, and NKWD. Residues 354 to 437 form the KH-like domain; that stretch reads QRISTSKFNE…VPIDIYIREK (84 aa).

The protein belongs to the TRAFAC class TrmE-Era-EngA-EngB-Septin-like GTPase superfamily. EngA (Der) GTPase family. As to quaternary structure, associates with the 50S ribosomal subunit.

GTPase that plays an essential role in the late steps of ribosome biogenesis. The protein is GTPase Der of Flavobacterium johnsoniae (strain ATCC 17061 / DSM 2064 / JCM 8514 / BCRC 14874 / CCUG 350202 / NBRC 14942 / NCIMB 11054 / UW101) (Cytophaga johnsonae).